Here is a 144-residue protein sequence, read N- to C-terminus: D-aminoacyl-tRNA deacylase (144 aa).

The short motif at 137 to 138 is the Gly-cisPro motif, important for rejection of L-amino acids element; it reads GP.

It belongs to the DTD family. Homodimer.

The protein resides in the cytoplasm. The catalysed reaction is glycyl-tRNA(Ala) + H2O = tRNA(Ala) + glycine + H(+). It carries out the reaction a D-aminoacyl-tRNA + H2O = a tRNA + a D-alpha-amino acid + H(+). Functionally, an aminoacyl-tRNA editing enzyme that deacylates mischarged D-aminoacyl-tRNAs. Also deacylates mischarged glycyl-tRNA(Ala), protecting cells against glycine mischarging by AlaRS. Acts via tRNA-based rather than protein-based catalysis; rejects L-amino acids rather than detecting D-amino acids in the active site. By recycling D-aminoacyl-tRNA to D-amino acids and free tRNA molecules, this enzyme counteracts the toxicity associated with the formation of D-aminoacyl-tRNA entities in vivo and helps enforce protein L-homochirality. This Marinomonas sp. (strain MWYL1) protein is D-aminoacyl-tRNA deacylase.